Here is a 584-residue protein sequence, read N- to C-terminus: Endogenous retrovirus group FC1 Env polyprotein (584 aa).

Positions 1-22 (MARPSPLCLLLLLTLLTPIVPS) are cleaved as a signal peptide. Topologically, residues 23-518 (NSLLTEPPFR…GWWQSPLTTW (496 aa)) are extracellular. N-linked (GlcNAc...) asparagine glycosylation is found at N69 and N247. Positions 251 to 254 (CFLC) match the CXXC motif. 8 N-linked (GlcNAc...) asparagine glycosylation sites follow: N272, N276, N308, N313, N322, N334, N342, and N346. Positions 384–404 (AVFPPLVIGVSLTSSLVASGL) are fusion peptide. The short motif at 449–465 (MQNRRALDLLTADKGGT) is the CKS-17 element. Residues C466 and C473 are joined by a disulfide bond. A CX6CC motif is present at residues 466 to 474 (CMFLGEECC). A glycan (N-linked (GlcNAc...) asparagine) is linked at N478. Residues 519 to 539 (IIPFISPILIICLLLLIAPCV) traverse the membrane as a helical segment. Residues 540-584 (LKFIKNRISEVSRVTVNQMLLHPYSRLPTSEDHYDDALTQQEAAR) lie on the Cytoplasmic side of the membrane.

This sequence belongs to the gamma type-C retroviral envelope protein family. HERV class-I F(c)1 env subfamily. As to quaternary structure, the surface (SU) and transmembrane (TM) proteins form a heterodimer. SU and TM are attached by noncovalent interactions or by a labile interchain disulfide bond. In terms of processing, specific enzymatic cleavages in vivo yield the mature SU and TM proteins. The CXXC motif is highly conserved across a broad range of retroviral envelope proteins. It is thought to participate in the formation of a labile disulfide bond possibly with the CX6CC motif present in the transmembrane protein. Low expression in skin, testis and trachea.

The protein resides in the virion. It localises to the cell membrane. Functionally, retroviral envelope proteins mediate receptor recognition and membrane fusion during early infection. Endogenous envelope proteins may have kept, lost or modified their original function during evolution. This endogenous envelope protein has lost its original fusogenic properties. In terms of biological role, SU mediates receptor recognition. TM anchors the envelope heterodimer to the viral membrane through one transmembrane domain. The other hydrophobic domain, called fusion peptide, mediates fusion of the viral membrane with the target cell membrane. The chain is Endogenous retrovirus group FC1 Env polyprotein (ERVFC1) from Homo sapiens (Human).